The primary structure comprises 314 residues: Porphobilinogen deaminase (314 aa).

S-(dipyrrolylmethanemethyl)cysteine is present on Cys-249.

It belongs to the HMBS family. Monomer. The cofactor is dipyrromethane.

It catalyses the reaction 4 porphobilinogen + H2O = hydroxymethylbilane + 4 NH4(+). It functions in the pathway porphyrin-containing compound metabolism; protoporphyrin-IX biosynthesis; coproporphyrinogen-III from 5-aminolevulinate: step 2/4. Its function is as follows. Tetrapolymerization of the monopyrrole PBG into the hydroxymethylbilane pre-uroporphyrinogen in several discrete steps. The polypeptide is Porphobilinogen deaminase (Brucella suis biovar 1 (strain 1330)).